Here is a 651-residue protein sequence, read N- to C-terminus: Mitochondrial sodium/calcium exchanger protein (651 aa).

Residues 51 to 71 (VILIILGILYLIILFVIMSSI) traverse the membrane as a helical segment. Residues 72-91 (ADDFFCPAISGIVSHLRMSE) lie on the Cytoplasmic side of the membrane. Residues 92–112 (SIAGVTFLAFGNGAPDVFSSI) traverse the membrane as a helical segment. Residues 113–126 (SSVLTTPKPKADLA) are Extracellular-facing. A helical transmembrane segment spans residues 127–147 (LGDLFGTSIFVTTVVLAIIIF). Residues 148 to 161 (TKSFKVAIIPTLRD) are Cytoplasmic-facing. Residues 162–182 (LIFYMTTLAFIVFCFLKFDKI) traverse the membrane as a helical segment. Residue Glu183 is a topological domain, extracellular. A helical transmembrane segment spans residues 184-204 (VWMPATFLGIYGVYVVTVIIL). Topologically, residues 205–398 (GIYRTHRKKR…PSRDEFSEMN (194 aa)) are cytoplasmic. The chain crosses the membrane as a helical span at residues 399–419 (IFIKIVTVIKVVPVFFFKLTV). The Extracellular portion of the chain corresponds to 420 to 428 (PSNEMSWCK). A helical membrane pass occupies residues 429–449 (PLFILHCFASIQFALFSIQII). Residues 450-458 (TLKPFDGSP) are Cytoplasmic-facing. Residues 459-479 (GLWLYGLGFSAILAMVAMYFL) traverse the membrane as a helical segment. Topologically, residues 480-486 (PLSKEQK) are extracellular. The chain crosses the membrane as a helical span at residues 487–507 (YYKEIYSYLGFLMSIAWIYAT). The Cytoplasmic segment spans residues 508–510 (SNE). A helical membrane pass occupies residues 511-531 (IVSVVTMIGVVTGLSMELLGL). Over 532–559 (TIMAWSNCIGDIVADIAVVKQGYPKMAM) the chain is Extracellular. The helical transmembrane segment at 560 to 580 (AAAIGGPLFNLLIGFGLPFTI) threads the bilayer. Topologically, residues 581-595 (AAAQGKEMELLINPV) are cytoplasmic. Residues 596 to 616 (YRLLMLFLGISLVTTFVALFI) form a helical membrane-spanning segment. Residues 617 to 626 (QRFTVRRPHA) lie on the Extracellular side of the membrane. A helical membrane pass occupies residues 627 to 647 (VLLIFIFVVFLIFICLAEFHV). At 648-651 (LEWN) the chain is on the cytoplasmic side.

It belongs to the Ca(2+):cation antiporter (CaCA) (TC 2.A.19) family. SLC24A subfamily. As to expression, expressed in the seam cells of the organism. Expression is visible in the seam cells across all larval stages, and expression persists into the adult stage of the organism.

The protein resides in the mitochondrion inner membrane. Inhibited by the sodium/calcium exchanger inhibitor CGP-37157. Its function is as follows. Mitochondrial sodium/calcium antiporter that mediates sodium-dependent calcium efflux from mitochondrion, thereby acting as a key regulator of mitochondrion calcium homeostasis. Required for patterning of neural circuits: functions in the same pathway as RAC-dependent effectors of the unc-6/netrin signaling pathway to set left/ right patterning of the VD/DD GABAergic circuit. The chain is Mitochondrial sodium/calcium exchanger protein from Caenorhabditis elegans.